Here is a 325-residue protein sequence, read N- to C-terminus: tRNA dimethylallyltransferase (325 aa).

25–32 is an ATP binding site; that stretch reads GNTGSGKS. Residue 27–32 participates in substrate binding; sequence TGSGKS. An interaction with substrate tRNA region spans residues 50–53; it reads DSRQ.

It belongs to the IPP transferase family. In terms of assembly, monomer. Mg(2+) is required as a cofactor.

It catalyses the reaction adenosine(37) in tRNA + dimethylallyl diphosphate = N(6)-dimethylallyladenosine(37) in tRNA + diphosphate. Its function is as follows. Catalyzes the transfer of a dimethylallyl group onto the adenine at position 37 in tRNAs that read codons beginning with uridine, leading to the formation of N6-(dimethylallyl)adenosine (i(6)A). This Dehalococcoides mccartyi (strain ATCC BAA-2266 / KCTC 15142 / 195) (Dehalococcoides ethenogenes (strain 195)) protein is tRNA dimethylallyltransferase.